Consider the following 364-residue polypeptide: Pre-small/secreted glycoprotein (364 aa).

A signal peptide spans 1 to 32 (MGVTGILQLPRDRFKRTSFFLWVIILFQRTFS). N-linked (GlcNAc...) asparagine; by host glycosylation is present at Asn40. 2 disulfide bridges follow: Cys108–Cys135 and Cys121–Cys147. Asn204, Asn228, Asn238, Asn257, and Asn268 each carry an N-linked (GlcNAc...) asparagine; by host glycan.

Belongs to the filoviruses glycoprotein family. In terms of assembly, homodimer; disulfide-linked. The homodimers are linked by two disulfide bonds in a parallel orientation. Monomer. Post-translationally, this precursor is processed into mature sGP and delta-peptide by host furin or furin-like proteases. The cleavage site corresponds to the furin optimal cleavage sequence [KR]-X-[KR]-R. In terms of processing, N-glycosylated. O-glycosylated.

Its subcellular location is the secreted. Functionally, seems to possess an anti-inflammatory activity as it can reverse the barrier-decreasing effects of TNF alpha. Might therefore contribute to the lack of inflammatory reaction seen during infection in spite the of extensive necrosis and massive virus production. Does not seem to be involved in activation of primary macrophages. Does not seem to interact specifically with neutrophils. In terms of biological role, viroporin that permeabilizes mammalian cell plasma membranes. It acts by altering permeation of ionic compounds and small molecules. This activity may lead to viral enterotoxic activity. This Zaire ebolavirus (strain Eckron-76) (ZEBOV) protein is Pre-small/secreted glycoprotein (GP).